Here is a 608-residue protein sequence, read N- to C-terminus: Aspartate--tRNA(Asp/Asn) ligase (608 aa).

L-aspartate is bound at residue E187. The aspartate stretch occupies residues Q211–K214. Residues R233 and H461 each coordinate L-aspartate. R233 to E235 provides a ligand contact to ATP. Residue E495 participates in ATP binding. R502 contacts L-aspartate. G547 to R550 is an ATP binding site.

Belongs to the class-II aminoacyl-tRNA synthetase family. Type 1 subfamily. As to quaternary structure, homodimer.

It is found in the cytoplasm. The catalysed reaction is tRNA(Asx) + L-aspartate + ATP = L-aspartyl-tRNA(Asx) + AMP + diphosphate. Functionally, aspartyl-tRNA synthetase with relaxed tRNA specificity since it is able to aspartylate not only its cognate tRNA(Asp) but also tRNA(Asn). Reaction proceeds in two steps: L-aspartate is first activated by ATP to form Asp-AMP and then transferred to the acceptor end of tRNA(Asp/Asn). In Chlorobium phaeobacteroides (strain BS1), this protein is Aspartate--tRNA(Asp/Asn) ligase.